The sequence spans 289 residues: Diacylglycerol pyrophosphate phosphatase 1 (289 aa).

The Vacuolar segment spans residues 1–21; that stretch reads MNRVSFIKTPFNIGAKWRLED. A helical transmembrane segment spans residues 22–42; it reads VFLLIIMILLNYPVYYQQPFE. The Cytoplasmic segment spans residues 43 to 65; sequence RQFYINDLTISHPYATTERVNNN. Residues 66 to 86 traverse the membrane as a helical segment; sequence MLFVYSFVVPSLTILIIGSIL. At 87–92 the chain is on the vacuolar side; the sequence is ADRRHL. The chain crosses the membrane as a helical span at residues 93–113; sequence IFILYTSLLGLSLAWFSTSFF. The Cytoplasmic segment spans residues 114–172; the sequence is TNFIKNWIGRLRPDFLDRCQPVEGLPLDTLFTAKDVCTTKNHERLLDGFRTTPSGHSSE. The tract at residues 118–126 is phosphatase sequence motif I; the sequence is KNWIGRLRP. The phosphatase sequence motif II stretch occupies residues 166–169; sequence PSGH. The next 2 helical transmembrane spans lie at 173-193 and 194-214; these read SFAGLGYLYFWLCGQLLTESP and LMPLWRKMVAFLPLLGAALIA. The Cytoplasmic portion of the chain corresponds to 215-222; it reads LSRTQDYR. The segment at 216–227 is phosphatase sequence motif III; that stretch reads SRTQDYRHHFVD. Residues 223 to 243 form a helical membrane-spanning segment; the sequence is HHFVDVILGSMLGYIMAHFFY. Topologically, residues 244-289 are vacuolar; the sequence is RRIFPPIDDPLPFKPLMDDSDVTLEEAVTHQRIPDEELHPLSDEGM. The residue at position 285 (Ser-285) is a Phosphoserine.

It belongs to the PA-phosphatase related phosphoesterase family.

It localises to the vacuole membrane. The catalysed reaction is a 1,2-diacyl-sn-glycerol 3-diphosphate + H2O = a 1,2-diacyl-sn-glycero-3-phosphate + phosphate + H(+). The enzyme catalyses a 1,2-diacyl-sn-glycero-3-phosphate + H2O = a 1,2-diacyl-sn-glycerol + phosphate. It carries out the reaction a 1-acyl-sn-glycero-3-phosphate + H2O = a 1-acyl-sn-glycerol + phosphate. With respect to regulation, inhibited by sodium fluoride (NaF) and pyrophosphate. Strongly inhibited by manganese ion and, to a lower extent, by magnesium and calcium ions. Also inhibited by Cu(2+) ion. In an indirect manner, it is also inhibited by the zinc ion which is able to form a complex with DGPP and prevent the enzyme from removing the phosphate from the substrate. Not inhibited by N-ethylmaleimide. Catalyzes the dephosphorylation of diacylglycerol diphosphate (DGPP) to phosphatidate (PA) and the subsequent dephosphorylation of PA to diacylglycerol (DAG). Together with LPP1, regulates intracellular DGPP and PA levels, which are phospholipid molecules believed to play a signaling role in stress response. Can also use lysophosphatidic acid (LPA) and phosphatidylglycerophosphate as substrates. Substrate preference is DGPP &gt; LPA &gt; PA. Activity is independent of a divalent cation ion and insensitive to inhibition by N-ethylmaleimide. The polypeptide is Diacylglycerol pyrophosphate phosphatase 1 (DPP1) (Saccharomyces cerevisiae (strain ATCC 204508 / S288c) (Baker's yeast)).